The primary structure comprises 637 residues: ATP-dependent zinc metalloprotease FtsH (637 aa).

Residues 1–44 (MAKHSQHSSPPRKLFDTLNDLWQRAKSEAGLSAEGPEGTRRRNN) are Cytoplasmic-facing. Residues 45-65 (LILYLLLVLSTLYLLNGYQTL) form a helical membrane-spanning segment. The Periplasmic portion of the chain corresponds to 66–141 (RNEEIPYSEF…TVRYGSNWFS (76 aa)). A helical membrane pass occupies residues 142–162 (SLIFNWIVPIVLLTLFWTWMA). The Cytoplasmic portion of the chain corresponds to 163-637 (RRMTGGRGFL…VKAVIREAAS (475 aa)). ATP is bound at residue 231–238 (GPPGTGKT). Histidine 454 serves as a coordination point for Zn(2+). The active site involves glutamate 455. Residues histidine 458 and aspartate 531 each contribute to the Zn(2+) site.

The protein in the central section; belongs to the AAA ATPase family. In the C-terminal section; belongs to the peptidase M41 family. In terms of assembly, homohexamer. Zn(2+) is required as a cofactor.

It localises to the cell inner membrane. Functionally, acts as a processive, ATP-dependent zinc metallopeptidase for both cytoplasmic and membrane proteins. Plays a role in the quality control of integral membrane proteins. The sequence is that of ATP-dependent zinc metalloprotease FtsH from Methylococcus capsulatus (strain ATCC 33009 / NCIMB 11132 / Bath).